Consider the following 540-residue polypeptide: Coatomer subunit delta (540 aa).

A disordered region spans residues 169 to 263 (RHEEMLRGKR…GMILGGKSGT (95 aa)). The segment covering 179 to 197 (SGGYTGISGGGGMGSGGMG) has biased composition (gly residues). Over residues 212-229 (NNNNNNNNNNNNNNNNNN) the composition is skewed to low complexity. Over residues 238–250 (SPNTSRPSAASSG) the composition is skewed to polar residues. Residues 251–261 (SQGGMILGGKS) show a composition bias toward gly residues. The MHD domain occupies 304 to 540 (QEGVHITVEE…TLSVDTYEIK (237 aa)).

The protein belongs to the adaptor complexes medium subunit family. Delta-COP subfamily. In terms of assembly, oligomeric complex that consists of at least the alpha, beta, beta', gamma, delta, epsilon and zeta subunits.

The protein resides in the cytoplasm. It is found in the golgi apparatus membrane. The protein localises to the cytoplasmic vesicle. Its subcellular location is the COPI-coated vesicle membrane. Its function is as follows. The coatomer is a cytosolic protein complex that binds to dilysine motifs and reversibly associates with Golgi non-clathrin-coated vesicles, which further mediate biosynthetic protein transport from the ER, via the Golgi up to the trans Golgi network. Coatomer complex is required for budding from Golgi membranes, and is essential for the retrograde Golgi-to-ER transport of dilysine-tagged proteins. In Dictyostelium discoideum (Social amoeba), this protein is Coatomer subunit delta (copd).